A 503-amino-acid polypeptide reads, in one-letter code: Cytochrome P450 71B6 (503 aa).

The helical transmembrane segment at 10-30 (TELLPWLLLLLIPPLLIFFLL) threads the bilayer. C446 contributes to the heme binding site.

The protein belongs to the cytochrome P450 family. Heme is required as a cofactor.

It is found in the membrane. The polypeptide is Cytochrome P450 71B6 (CYP71B6) (Arabidopsis thaliana (Mouse-ear cress)).